We begin with the raw amino-acid sequence, 101 residues long: Small integral membrane protein 21 (101 aa).

The helical transmembrane segment at 49 to 65 (HIRFFTLLVLFHVMVLL) threads the bilayer.

It is found in the membrane. The polypeptide is Small integral membrane protein 21 (SMIM21) (Homo sapiens (Human)).